Consider the following 341-residue polypeptide: Short chain dehydrogenase FGM9 (341 aa).

Residues Leu38, Lys63, Asp88, and Asn114 each contribute to the NADP(+) site. Residues Ser167 and Tyr200 each act as proton donor in the active site. Residues Tyr200 and Lys204 each coordinate NADP(+). The active-site Lowers pKa of active site Tyr is the Lys204.

Belongs to the short-chain dehydrogenases/reductases (SDR) family.

Its pathway is secondary metabolite biosynthesis. Short chain dehydrogenase; part of the Fg3_54/C64 gene cluster that mediates the biosynthesis of the octapeptide fusaoctaxin A, a virulence factor that is required for cell-to-cell invasiveness of plant host. The 2 nonribosomal peptide synthetases NRPS9 and NRPS5 form an assembly line which likely utilizes GABA as a starter unit (loaded on the unique module M1 of NRPS9) and sequentially incorporates seven extender units composed of the residues L-Ala, L-allo-Ile, L-Ser, L-Val, L-Ser, L-Leu and L-Leu, respectively. During the process, each of the residues that are tethered on modules M3-M7 of NRPS5 containing an E domain can undergo an epimerization reaction to produce a D-configuration before the transpeptidation reaction occurs. The elongation of the peptidyl chain might be terminated by module M8-mediated L-Leu incorporation, followed by R domain-catalyzed 4 electron reduction to release the resulting octapeptide from the assembly line as an alcohol. Fusaoctaxin A is cleaved by the cluster specific ABC transporter FGM5 to the pentapeptide fusapentaxin A and the tripeptide fusatrixin A. The other enzymes from the cluster, FGM1, FGM2, FGM3 and FGM9 seem not to be involved in the biosynthesis of fusaoctaxin A and their functions have still to be determined. This Gibberella zeae (strain ATCC MYA-4620 / CBS 123657 / FGSC 9075 / NRRL 31084 / PH-1) (Wheat head blight fungus) protein is Short chain dehydrogenase FGM9.